We begin with the raw amino-acid sequence, 428 residues long: Histidine--tRNA ligase (428 aa).

Belongs to the class-II aminoacyl-tRNA synthetase family. In terms of assembly, homodimer.

It is found in the cytoplasm. It catalyses the reaction tRNA(His) + L-histidine + ATP = L-histidyl-tRNA(His) + AMP + diphosphate + H(+). The chain is Histidine--tRNA ligase from Sorangium cellulosum (strain So ce56) (Polyangium cellulosum (strain So ce56)).